The following is a 118-amino-acid chain: Heavy metal-associated isoprenylated plant protein 47 (118 aa).

Positions 1 to 67 (MRIKLSVNSE…KACHVTLETL (67 aa)) constitute an HMA domain. The residue at position 115 (cysteine 115) is a Cysteine methyl ester. The S-farnesyl cysteine moiety is linked to residue cysteine 115. A propeptide spans 116 to 118 (LVM) (removed in mature form).

Belongs to the HIPP family.

Its function is as follows. Heavy-metal-binding protein. The chain is Heavy metal-associated isoprenylated plant protein 47 from Arabidopsis thaliana (Mouse-ear cress).